A 234-amino-acid polypeptide reads, in one-letter code: Large ribosomal subunit protein uL1c (234 aa).

It belongs to the universal ribosomal protein uL1 family. As to quaternary structure, part of the 50S ribosomal subunit.

The protein resides in the plastid. The protein localises to the chloroplast. Functionally, binds directly to 23S rRNA. Might be involved in E site tRNA release (Potential). The protein is Large ribosomal subunit protein uL1c (rpl1) of Rhodomonas salina (Cryptomonas salina).